The sequence spans 359 residues: MKFAWIRPNGTWNDRKEAIVDSLESGFDHIMDLDNAETIKKLGSVTIISDKEDSDITLLGLNNKITMADIKKAQESGKEVAAYVEINNKDDELLVSKLGTVADYVILKGKNWKVIPLENIIASLQNRTSKIIVDVPNYEEAKLALETMEHGSDGVLLSSNDGNEIRKLGALIEKVSKESYDLKAATVTKVESVGIGDRVCVDTCSMMNVGDGMLVGSFASGLFLVHSETLESEYVASRPFRVNAGPVHAYVMTPENKTRYLSELEAGDEVVTLNSKGEANTVIVGRVKIEKRPLLLIEAKYKNSRIRTLVQNAETIRLVNDKGEPISVSKLKVGDKVLAYFSEAARHFGMAIEEQIIEK.

This sequence belongs to the archaeal-type DHQ synthase family.

The enzyme catalyses 2-amino-2,3,7-trideoxy-D-lyxo-hept-6-ulosonate + NAD(+) + H2O = 3-dehydroquinate + NH4(+) + NADH + H(+). Functionally, catalyzes the oxidative deamination and cyclization of 2-amino-3,7-dideoxy-D-threo-hept-6-ulosonic acid (ADH) to yield 3-dehydroquinate (DHQ), which is fed into the canonical shikimic pathway of aromatic amino acid biosynthesis. This Methanosphaera stadtmanae (strain ATCC 43021 / DSM 3091 / JCM 11832 / MCB-3) protein is 3-dehydroquinate synthase.